The following is a 787-amino-acid chain: Pyridoxal-dependent decarboxylase domain-containing protein 1 (787 aa).

The segment covering 26 to 44 (MLEKSPRRTEEENGKKPVS) has biased composition (basic and acidic residues). The segment at 26-52 (MLEKSPRRTEEENGKKPVSEDIPGPLQ) is disordered. At S652 the chain carries Phosphoserine. The segment at 682 to 787 (QGTGVTPPPT…SQVEELERLR (106 aa)) is disordered. Phosphothreonine occurs at positions 687 and 691. Residues S710, S718, S722, and S748 each carry the phosphoserine modification. The segment covering 725-748 (HIEDLEKVEQLSSGLEHDNLEAHS) has biased composition (basic and acidic residues). Positions 759–771 (TARQTEALQNQAQ) are enriched in polar residues. The span at 772-787 (HQEDDHSQVEELERLR) shows a compositional bias: basic and acidic residues. Phosphoserine is present on S778.

Belongs to the group II decarboxylase family. It depends on pyridoxal 5'-phosphate as a cofactor.

This chain is Pyridoxal-dependent decarboxylase domain-containing protein 1 (Pdxdc1), found in Mus musculus (Mouse).